We begin with the raw amino-acid sequence, 28 residues long: Cysteine-rich venom protein asurin-2 (28 aa).

A compositionally biased stretch (basic and acidic residues) spans 1-15 (SNKKDYRKEIVDKHN). The tract at residues 1–28 (SNKKDYRKEIVDKHNALSRSVKPTASNM) is disordered. Over residues 17–28 (LSRSVKPTASNM) the composition is skewed to polar residues.

Belongs to the CRISP family. Contains 8 disulfide bonds. Expressed by the venom gland.

It localises to the secreted. Its function is as follows. Blocks contraction of smooth muscle elicited by high potassium-induced depolarization, but does not block caffeine-stimulated contraction. May target voltage-gated calcium channels on smooth muscle. The sequence is that of Cysteine-rich venom protein asurin-2 from Austrelaps superbus (Lowland copperhead snake).